The chain runs to 361 residues: Microtubule-associated protein Jupiter (361 aa).

Polar residues predominate over residues 1-15 (MISNYDITDSKSSSK). Disordered stretches follow at residues 1–38 (MISN…TPRN) and 70–99 (IGDN…TPGK). Ser-24 bears the Phosphoserine mark. Thr-35 carries the phosphothreonine modification. Positions 73 to 87 (NPRRGQKPVDSHSRL) are enriched in basic and acidic residues. Position 96 is a phosphothreonine (Thr-96). Ser-105 is modified (phosphoserine). 2 stretches are compositionally biased toward low complexity: residues 125–134 (GSSTANTTNG) and 141–154 (SGSV…VSSS). Disordered regions lie at residues 125 to 165 (GSST…SGSR) and 328 to 361 (GSTN…SGLW). Phosphoserine occurs at positions 143 and 154. Over residues 155-165 (TENLKMNSGSR) the composition is skewed to polar residues.

The protein belongs to the MAP Jupiter family.

The protein resides in the nucleus. Its subcellular location is the cytoplasm. The protein localises to the cytoskeleton. It localises to the spindle. Binds to all microtubule populations. The sequence is that of Microtubule-associated protein Jupiter from Drosophila persimilis (Fruit fly).